The chain runs to 155 residues: MSDYEEAFNDGNENFEDFDVEHFSDEETYEEKPQFKDGETTDANGKTIVTGGNGPEDFQQHEQIRRKTLKEKAIPKDQRATTPYMTKYERARILGTRALQISMNAPVFVDLEGETDPLRIAMKELAEKKIPLVIRRYLPDGSFEDWSVEELIVDL.

Positions 1 to 19 are enriched in acidic residues; that stretch reads MSDYEEAFNDGNENFEDFD. The tract at residues 1–57 is disordered; the sequence is MSDYEEAFNDGNENFEDFDVEHFSDEETYEEKPQFKDGETTDANGKTIVTGGNGPED. Over residues 20–39 the composition is skewed to basic and acidic residues; the sequence is VEHFSDEETYEEKPQFKDGE. Serine 24 carries the phosphoserine modification. Positions 111–132 are leucine-zipper; sequence LEGETDPLRIAMKELAEKKIPL.

It belongs to the archaeal Rpo6/eukaryotic RPB6 RNA polymerase subunit family. Component of the RNA polymerase I (Pol I), RNA polymerase II (Pol II) and RNA polymerase III (Pol III) complexes. Component of the RNA polymerase I (Pol I) complex consisting of 14 subunits: RPA135, RPA190, RPC40, RPA14, RPB5, RPO26, RPA43, RPB8, RPA12, RPB10, RPC19, RPC10, RPA49 and RPA34. The complex is composed of a horseshoe-shaped core containing ten subunits (RPA135, RPA190, RPB5, RPO26, RPB8, RPB10, RPC10, RPA12, RPC19 and RPC40) where RPA135 and RPA190 form the DNA-binding cleft. Outside of the core, RPA14 and RPA43 form the stalk that mediates interactions with transcription initiation factors and newly synthesized RNA. Component of the RNA polymerase II (Pol II) complex consisting of 12 subunits: RPO21, RPB2, RPB3, RPB4, RPB5, RPO26, RPB7, RPB8, RPB9, RPB10 and RPC10. Component of the RNA polymerase III (Pol III) complex consisting of 17 subunits.

The protein resides in the cytoplasm. Its subcellular location is the nucleus. DNA-dependent RNA polymerases catalyze the transcription of DNA into RNA using the four ribonucleoside triphosphates as substrates. Common component of RNA polymerases I, II and III which synthesize ribosomal RNA precursors, mRNA precursors and many functional non-coding RNAs, and small RNAs, such as 5S rRNA and tRNAs, respectively. Pol II is the central component of the basal RNA polymerase II transcription machinery. RNA polymerases are composed of mobile elements that move relative to each other. In Pol II, RPB6 is part of the clamp element and together with parts of RPB1 and RPB2 forms a pocket to which the RPB4-RPB7 subcomplex binds. This chain is DNA-directed RNA polymerases I, II, and III subunit RPABC2 (RPO26), found in Saccharomyces cerevisiae (strain ATCC 204508 / S288c) (Baker's yeast).